Reading from the N-terminus, the 247-residue chain is Auxin-responsive protein IAA13 (247 aa).

Residues 14-18 (LELGL) carry the EAR-like (transcriptional repression) motif. Residues 25–40 (GTAAKIGKSGGGGAWG) show a composition bias toward gly residues. Disordered stretches follow at residues 25–44 (GTAAKIGKSGGGGAWGERGR) and 49–119 (KDFP…PKDV). The segment covering 62 to 75 (SASHAGSSPPRSSS) has biased composition (low complexity). Positions 87 to 98 (RMNSLVNNQATK) are enriched in polar residues. The span at 106–119 (AGKKKVKDDEPKDV) shows a compositional bias: basic and acidic residues. In terms of domain architecture, PB1 spans 129-225 (VGFIKVNMDG…SVKRLRVMKT (97 aa)).

It belongs to the Aux/IAA family. Homodimers and heterodimers. Interacts with TPL. In terms of tissue distribution, preferentially expressed in stems.

The protein resides in the nucleus. Functionally, aux/IAA proteins are short-lived transcriptional factors that function as repressors of early auxin response genes at low auxin concentrations. Repression is thought to result from the interaction with auxin response factors (ARFs), proteins that bind to the auxin-responsive promoter element (AuxRE). Formation of heterodimers with ARF proteins may alter their ability to modulate early auxin response genes expression. This Arabidopsis thaliana (Mouse-ear cress) protein is Auxin-responsive protein IAA13 (IAA13).